A 44-amino-acid chain; its full sequence is Photosystem I reaction center subunit IX (44 aa).

Residues Tyr7–Ile27 traverse the membrane as a helical segment.

This sequence belongs to the PsaJ family.

Its subcellular location is the plastid. It is found in the chloroplast thylakoid membrane. May help in the organization of the PsaE and PsaF subunits. The sequence is that of Photosystem I reaction center subunit IX from Pelargonium hortorum (Common geranium).